Reading from the N-terminus, the 237-residue chain is Phosphoribosylaminoimidazole-succinocarboxamide synthase (237 aa).

It belongs to the SAICAR synthetase family.

It carries out the reaction 5-amino-1-(5-phospho-D-ribosyl)imidazole-4-carboxylate + L-aspartate + ATP = (2S)-2-[5-amino-1-(5-phospho-beta-D-ribosyl)imidazole-4-carboxamido]succinate + ADP + phosphate + 2 H(+). Its pathway is purine metabolism; IMP biosynthesis via de novo pathway; 5-amino-1-(5-phospho-D-ribosyl)imidazole-4-carboxamide from 5-amino-1-(5-phospho-D-ribosyl)imidazole-4-carboxylate: step 1/2. In Klebsiella pneumoniae (strain 342), this protein is Phosphoribosylaminoimidazole-succinocarboxamide synthase.